A 572-amino-acid chain; its full sequence is MARILITSAIPYINGIKHLGNLVGSQLPADLYARYARARGHEVMFICATDEHGTPAELAAAKAGKPVAEYCAEMHAVQSDIAKRFGLSFDHFGRSSSERNKALTQYFAGKLAENGLIEEVSEKQVYSHADGRFLPDRYIEGTCPNCGYDKARGDQCENCTKQLDPTDLIDPRSAISGSTDLEVRETKHLYLRQSALKDQLDAWIDSKTDWPILTTSIAKKWLHDGDGLQDRGITRDLDWGVPVKKGTEDWPGMEGKVFYVWFDAPIEYIAGTAEWADANGLDDAAWERWWRTDKGADEVRYVQFMGKDNVPFHTLSFPATIMGSGDPWKLVDYIKSFNYLTYDGGQFSTSQGRGVFMDQALEILPADYWRWWLLSHAPENSDSEFTWENFQASVNKDLADVLGNFASRVTKFCRSKYGEEVPAGGAYGPAEEALIAELTTKLRAYEGHMDAMEVRKAAAELRAIWVAGNEYLQAAAPWSVFKTDPDAAAAIIRLGLNLVRFYAVLSQPFIPDASAALLRAMKAEDAGWPGDVAEALAALPAGHAFAVPEVTFAKISDADREAWAEKFSGTRD.

The 'HIGH' region signature appears at 11-21 (PYINGIKHLGN). The Zn(2+) site is built by Cys143, Cys146, Cys156, and Cys159. Positions 346 to 350 (QFSTS) match the 'KMSKS' region motif. Position 349 (Thr349) interacts with ATP.

This sequence belongs to the class-I aminoacyl-tRNA synthetase family. MetG type 1 subfamily. Monomer. Zn(2+) is required as a cofactor.

The protein resides in the cytoplasm. It carries out the reaction tRNA(Met) + L-methionine + ATP = L-methionyl-tRNA(Met) + AMP + diphosphate. Its function is as follows. Is required not only for elongation of protein synthesis but also for the initiation of all mRNA translation through initiator tRNA(fMet) aminoacylation. This chain is Methionine--tRNA ligase, found in Dinoroseobacter shibae (strain DSM 16493 / NCIMB 14021 / DFL 12).